Consider the following 369-residue polypeptide: Cell division protein FtsZ (369 aa).

Residues 27 to 31 (GAGNN), 119 to 121 (GTG), glutamate 150, and asparagine 189 contribute to the GTP site.

Belongs to the FtsZ family. In terms of assembly, homodimer. Polymerizes to form a dynamic ring structure in a strictly GTP-dependent manner. Interacts directly with several other division proteins.

It localises to the cytoplasm. In terms of biological role, essential cell division protein that forms a contractile ring structure (Z ring) at the future cell division site. The regulation of the ring assembly controls the timing and the location of cell division. One of the functions of the FtsZ ring is to recruit other cell division proteins to the septum to produce a new cell wall between the dividing cells. Binds GTP and shows GTPase activity. The protein is Cell division protein FtsZ of Mycoplasma genitalium (strain ATCC 33530 / DSM 19775 / NCTC 10195 / G37) (Mycoplasmoides genitalium).